Consider the following 411-residue polypeptide: Methyl-CpG-binding domain protein 2 (411 aa).

A required for interaction with DHX9 and PRMT5 region spans residues 1-149; that stretch reads MRAHPGGGRC…GPRATESGKR (149 aa). Residues 1-158 form a disordered region; sequence MRAHPGGGRC…RMDCPALPPG (158 aa). Basic residues predominate over residues 77–95; that stretch reads GRGRGRGRGRGRGRGRGRG. A compositionally biased stretch (gly residues) spans 98 to 121; the sequence is PSGGSGLGGDGGGCGGGGSGGGGA. Residues 145–213 form the MBD domain; that stretch reads ESGKRMDCPA…SSFDFRTGKM (69 aa). Position 181 is a phosphoserine (Ser181). The interval 214–241 is disordered; sequence MPSKLQKNKQRLRNDPLNQNKGKPDLNT. Residues 229 to 241 are compositionally biased toward polar residues; sequence PLNQNKGKPDLNT. Ser407 bears the Phosphoserine mark.

Heterodimer with MBD3 (via N-terminus). Component of the MeCP1 complex that contains HDAC1 and HDAC2. Component of the nucleosome remodeling and deacetylase (NuRD) repressor complex, composed of core proteins MTA1, MTA2, MTA3, RBBP4, RBBP7, HDAC1, HDAC2, MBD2, MBD3, and peripherally associated proteins CDK2AP1, CDK2AP2, GATAD2A, GATAD2B, CHD3, CHD4 and CHD5. The exact stoichiometry of the NuRD complex is unknown, and some subunits such as MBD2 and MBD3, GATAD2A and GATAD2B, and CHD3, CHD4 and CHD5 define mutually exclusive NuRD complexes. Interacts with CDK2AP1. Interacts with DHX9. Interacts with DNMT1. Interacts with GATAD2A/p66-alpha. Interacts with GATAD2B/p66-beta. Interacts with GPN1. Interacts with MIZF. Interacts with PRMT5. Interacts with SIN3A. Interacts with SPHK2. Highly expressed in brain, heart, kidney, stomach, testis and placenta.

The protein localises to the nucleus. Its subcellular location is the chromosome. Its function is as follows. Binds CpG islands in promoters where the DNA is methylated at position 5 of cytosine within CpG dinucleotides. Binds hemimethylated DNA as well. Recruits histone deacetylases and DNA methyltransferases to chromatin. Acts as a component of the histone deacetylase NuRD complex which participates in the remodeling of chromatin. Acts as a transcriptional repressor and plays a role in gene silencing. Functions as a scaffold protein, targeting GATAD2A and GATAD2B to chromatin to promote repression. May enhance the activation of some unmethylated cAMP-responsive promoters. The chain is Methyl-CpG-binding domain protein 2 from Homo sapiens (Human).